Here is a 202-residue protein sequence, read N- to C-terminus: Dephospho-CoA kinase (202 aa).

Residues 5 to 202 (VIGLTGGIGS…KKYLTLTKMV (198 aa)) enclose the DPCK domain. 13–18 (GSGKTT) is a binding site for ATP.

The protein belongs to the CoaE family.

Its subcellular location is the cytoplasm. It carries out the reaction 3'-dephospho-CoA + ATP = ADP + CoA + H(+). The protein operates within cofactor biosynthesis; coenzyme A biosynthesis; CoA from (R)-pantothenate: step 5/5. Functionally, catalyzes the phosphorylation of the 3'-hydroxyl group of dephosphocoenzyme A to form coenzyme A. The sequence is that of Dephospho-CoA kinase from Colwellia psychrerythraea (strain 34H / ATCC BAA-681) (Vibrio psychroerythus).